Here is a 61-residue protein sequence, read N- to C-terminus: Photosystem II reaction center protein K (61 aa).

Positions 1 to 24 (MPNILSLTCICFNSVLCPTSFFFA) are excised as a propeptide. The chain crosses the membrane as a helical span at residues 32 to 52 (IFNPIVDVMPVIPVLFFLLAF).

Belongs to the PsbK family. In terms of assembly, PSII is composed of 1 copy each of membrane proteins PsbA, PsbB, PsbC, PsbD, PsbE, PsbF, PsbH, PsbI, PsbJ, PsbK, PsbL, PsbM, PsbT, PsbX, PsbY, PsbZ, Psb30/Ycf12, at least 3 peripheral proteins of the oxygen-evolving complex and a large number of cofactors. It forms dimeric complexes.

It localises to the plastid. The protein resides in the chloroplast thylakoid membrane. Functionally, one of the components of the core complex of photosystem II (PSII). PSII is a light-driven water:plastoquinone oxidoreductase that uses light energy to abstract electrons from H(2)O, generating O(2) and a proton gradient subsequently used for ATP formation. It consists of a core antenna complex that captures photons, and an electron transfer chain that converts photonic excitation into a charge separation. This is Photosystem II reaction center protein K from Sorghum bicolor (Sorghum).